We begin with the raw amino-acid sequence, 449 residues long: UDP-glycosyltransferase 76E6 (449 aa).

Residues Ser274, 333–335 (APQ), 350–358 (HCGWNSTLE), and 372–375 (HGEQ) contribute to the UDP-alpha-D-glucose site.

This sequence belongs to the UDP-glycosyltransferase family.

This Arabidopsis thaliana (Mouse-ear cress) protein is UDP-glycosyltransferase 76E6 (UGT76E6).